The primary structure comprises 404 residues: Serine/threonine transporter SstT (404 aa).

8 helical membrane-spanning segments follow: residues 17-37, 39-59, 75-95, 138-158, 179-199, 212-232, 287-307, and 313-333; these read IGIG…LTGF, ILGK…VFAL, MTLI…VAVL, ALAT…GLAL, IVVW…FTTI, FLIL…NPLI, IPLG…VLTL, and FGIP…AVSA.

The protein belongs to the dicarboxylate/amino acid:cation symporter (DAACS) (TC 2.A.23) family.

It is found in the cell membrane. The enzyme catalyses L-serine(in) + Na(+)(in) = L-serine(out) + Na(+)(out). It catalyses the reaction L-threonine(in) + Na(+)(in) = L-threonine(out) + Na(+)(out). Its function is as follows. Involved in the import of serine and threonine into the cell, with the concomitant import of sodium (symport system). This Streptococcus pyogenes serotype M1 protein is Serine/threonine transporter SstT.